The primary structure comprises 268 residues: MNTRDPGLAAIPDVQATPDTRRIAIQRVGVKGVRYPLTVKTLSGVQPSVGTWNMYVHLAEEQKGTHMSRFIALLEENTQALDVNVFGGMIRKMLALLEADAGRIEVSFPYFINKTAPVSGVQSLMDYEVGFNGEIKNGKLEITLKVLVPVTSLCPCSKKISAYGAHNQRSHITVQALLADDLVVEELIAQIEAQASCELFGLLKRPDEKYVTERAYDNPKFVEDLVRDVAVMLNNEARVLAYTLEAENFESIHNHSAYALIELDKRLA.

This sequence belongs to the GTP cyclohydrolase IV family.

The catalysed reaction is GTP + H2O = 7,8-dihydroneopterin 3'-triphosphate + formate + H(+). Its pathway is cofactor biosynthesis; 7,8-dihydroneopterin triphosphate biosynthesis; 7,8-dihydroneopterin triphosphate from GTP: step 1/1. In terms of biological role, converts GTP to 7,8-dihydroneopterin triphosphate. This Janthinobacterium sp. (strain Marseille) (Minibacterium massiliensis) protein is GTP cyclohydrolase FolE2.